The primary structure comprises 203 residues: MSAIGHSPTACSRCSRPRLRRKDLTSVLSPRLPCFKVSSSGEAFATDKADFITPKDLDDPCASPGWEASSLAQAKRYGKSKMANVLFAAELQRRMDAEGVDIISISLNPGPVKTQGAADVLPFMVRPMVWLFFKDPAEGAQTTLFAAAAAEIREEKERWKGGYLDGPGKLKSPSPRARDPQVAYNLWHTTESAVRAIGVLDKS.

Positions 23, 77, and 81 each coordinate NADP(+). Tyrosine 77 serves as the catalytic Proton acceptor. Lysine 81 acts as the Lowers pKa of active site Tyr in catalysis.

It belongs to the short-chain dehydrogenases/reductases (SDR) family.

The protein operates within secondary metabolite biosynthesis; terpenoid biosynthesis. In terms of biological role, short chain dehydrogenase/reductase; part of the gene cluster that mediates the biosynthesis of diterpenoid pyrones. The first step of the pathway is the synthesis of the alpha-pyrone moiety by the polyketide synthase dpmpA via condensation of one acetyl-CoA starter unit with 3 malonyl-CoA units and 2 methylations. The alpha-pyrone is then combined with geranylgeranyl pyrophosphate (GGPP) formed by the GGPP synthase dpmpD through the action of the prenyltransferase dpmpC to yield a linear alpha-pyrone diterpenoid. Subsequent steps in the diterpenoid pyrone biosynthetic pathway involve the decalin core formation, which is initiated by the epoxidation of the C10-C11 olefin by the FAD-dependent oxidoreductase dpmpE, and is followed by a cyclization cascade catalyzed by the terpene cyclase dpmpB. The short chain dehydrogenase/reductase dpmpG then oxidizes the 8S hydroxy group to a ketone and the short chain dehydrogenase/reductase dpmpH reduces the ketone to the 8R hydroxy group to yield higginsianin B. Higginsianin B is further methylated by the methyltransferase dpmpI to produce the intermediate named FDDP B. The cytochrome P450 monooxygenase dpmpJ then oxidizes the C-26 methyl to primary alcohol, producing the final diterpenoid pyrone with a C-26 primary alcohol on the gamma-pyrone moiety named FDDP C. The sequence is that of Short chain dehydrogenase/reductase dpmpH from Macrophomina phaseolina (strain MS6) (Charcoal rot fungus).